The primary structure comprises 513 residues: Cytochrome P450 monooxygenase sthF (513 aa).

2 helical membrane-spanning segments follow: residues 13–33 and 212–232; these read FPSL…YIFI and MLHP…IILL. Cys-452 provides a ligand contact to heme.

It belongs to the cytochrome P450 family. Heme serves as cofactor.

Its subcellular location is the membrane. The catalysed reaction is dehydroprobetaenone I + NADPH + O2 + H(+) = epoxybetaenone + NADP(+) + H2O. The enzyme catalyses dehydroprobetaenone I + 3 NADPH + 3 O2 + 3 H(+) = betaenone C + 3 NADP(+) + 3 H2O. It carries out the reaction probetaenone I + 3 NADPH + 3 O2 + 3 H(+) = betaenone B + 3 NADP(+) + 3 H2O. It participates in mycotoxin biosynthesis. In terms of biological role, cytochrome P450 monooxygenase; part of the gene cluster that mediates the biosynthesis of the phytotoxin stemphyloxin II. The first step of the pathway is the synthesis of dehydroprobetaenone I by the polyketide synthase sthA and the enoyl reductase sthE via condensation of one acetyl-CoA starter unit with 7 malonyl-CoA units and 5 methylations. The C-terminal reductase (R) domain of sthA catalyzes the reductive release of the polyketide chain. Because sthA lacks a designated enoylreductase (ER) domain, the required activity is provided the enoyl reductase sthE. The short-chain dehydrogenase/reductase sthC then catalyzes reduction of dehydroprobetaenone I to probetaenone I. The cytochrome P450 monooxygenase sthF catalyzes successive epoxidation, oxidation (resulting from epoxide opening) and hydroxylation to install a tertiary alcohol in the decaline ring to yield betaenone C from dehydroprobetaenone I and betaenone B from probetaenone I. The FAD-linked oxidoreductase sthB is responsible for the conversion of betaenone C to betaenone A via an intramolecular aldol reaction between C-1 and C-17 to form the bridged tricyclic system in betaenone A. Finally, the cytochrome P450 monooxygenase sthD catalyzes the hydroxylation of C-15 to afford the final metabolite stemphyloxin II. In Phaeosphaeria nodorum (strain SN15 / ATCC MYA-4574 / FGSC 10173) (Glume blotch fungus), this protein is Cytochrome P450 monooxygenase sthF.